We begin with the raw amino-acid sequence, 110 residues long: MDDNNQATTLSNDPAVNAPDTATLGRDKGKATQDPAPTDTSMDEGESDESENEDIVKEDEDGGDDLAPIDSSNIISGRRTRGKTIDFVDAAQKLKDDEGEDDEDDEDFEP.

Over residues 1 to 14 the composition is skewed to polar residues; that stretch reads MDDNNQATTLSNDP. Residues 1–110 form a disordered region; it reads MDDNNQATTL…DDEDDEDFEP (110 aa). Composition is skewed to acidic residues over residues 41 to 64 and 97 to 110; these read SMDE…DGGD and DEGE…DFEP.

This sequence belongs to the CHZ1 family. Forms a heterotrimer with H2A.Z-H2B, stabilizing the association of the histone dimer. Also, with a lower affinity, forms a heterotrimer with H2A-H2B.

It localises to the nucleus. In terms of biological role, forms a chaperone-bound H2A.Z-H2B complex that acts as a source for SWR1 complex-dependent H2A to H2A.Z histone replacement in chromatin. In Aspergillus oryzae (strain ATCC 42149 / RIB 40) (Yellow koji mold), this protein is Histone H2A.Z-specific chaperone chz1 (chz1).